Reading from the N-terminus, the 521-residue chain is Glutamate--tRNA ligase (521 aa).

The 'HIGH' region signature appears at 30 to 40 (PSPTGYLHVGG). The 'KMSKS' region motif lies at 277–281 (KLSKR). Residue K280 coordinates ATP.

Belongs to the class-I aminoacyl-tRNA synthetase family. Glutamate--tRNA ligase type 1 subfamily. As to quaternary structure, monomer.

The protein resides in the cytoplasm. It carries out the reaction tRNA(Glu) + L-glutamate + ATP = L-glutamyl-tRNA(Glu) + AMP + diphosphate. Its function is as follows. Catalyzes the attachment of glutamate to tRNA(Glu) in a two-step reaction: glutamate is first activated by ATP to form Glu-AMP and then transferred to the acceptor end of tRNA(Glu). The sequence is that of Glutamate--tRNA ligase from Chlorobium phaeovibrioides (strain DSM 265 / 1930) (Prosthecochloris vibrioformis (strain DSM 265)).